Consider the following 752-residue polypeptide: Polyribonucleotide nucleotidyltransferase (752 aa).

Positions 529 and 535 each coordinate Mg(2+). The KH domain maps to 595 to 654 (PRVTTIKVPVDKIGEVIGPKGKVINAITEETGAQISIEDDGTVFVGATDGPSAQAAIDKI). The S1 motif domain maps to 666–735 (GERFLGTVVK…KRGKISLILV (70 aa)).

This sequence belongs to the polyribonucleotide nucleotidyltransferase family. Mg(2+) serves as cofactor.

It is found in the cytoplasm. It catalyses the reaction RNA(n+1) + phosphate = RNA(n) + a ribonucleoside 5'-diphosphate. In terms of biological role, involved in mRNA degradation. Catalyzes the phosphorolysis of single-stranded polyribonucleotides processively in the 3'- to 5'-direction. This Mycobacterium tuberculosis (strain ATCC 25177 / H37Ra) protein is Polyribonucleotide nucleotidyltransferase.